The chain runs to 737 residues: 1,4-alpha-glucan branching enzyme GlgB (737 aa).

Aspartate 419 (nucleophile) is an active-site residue. Catalysis depends on glutamate 472, which acts as the Proton donor.

Belongs to the glycosyl hydrolase 13 family. GlgB subfamily. Monomer.

It catalyses the reaction Transfers a segment of a (1-&gt;4)-alpha-D-glucan chain to a primary hydroxy group in a similar glucan chain.. The protein operates within glycan biosynthesis; glycogen biosynthesis. Catalyzes the formation of the alpha-1,6-glucosidic linkages in glycogen by scission of a 1,4-alpha-linked oligosaccharide from growing alpha-1,4-glucan chains and the subsequent attachment of the oligosaccharide to the alpha-1,6 position. The protein is 1,4-alpha-glucan branching enzyme GlgB of Mesorhizobium japonicum (strain LMG 29417 / CECT 9101 / MAFF 303099) (Mesorhizobium loti (strain MAFF 303099)).